The sequence spans 272 residues: uncharacterized protein (272 aa).

The tract at residues 101–130 is disordered; it reads CPTGKKNKAPSSLIPKISKTSTSSLTKEDE. Low complexity predominate over residues 110–125; that stretch reads PSSLIPKISKTSTSSL. At S142 the chain carries Phosphoserine.

This is an uncharacterized protein from Arabidopsis thaliana (Mouse-ear cress).